The chain runs to 107 residues: Alpha-elapitoxin-Al2a (107 aa).

An N-terminal signal peptide occupies residues 1–21 (MKTLLLTLVVVTIVCLDLGDS). 5 disulfide bridges follow: C24-C41, C34-C62, C47-C51, C66-C77, and C78-C83.

Belongs to the three-finger toxin family. Long-chain subfamily. Type II alpha-neurotoxin sub-subfamily. Expressed by the venom gland.

It localises to the secreted. Functionally, binds with high affinity to muscular (alpha-1/CHRNA1) and neuronal (alpha-7/CHRNA7) nicotinic acetylcholine receptor (nAChR) and inhibits acetylcholine from binding to the receptor, thereby impairing neuromuscular and neuronal transmission. This is Alpha-elapitoxin-Al2a from Austrelaps labialis (Pygmy copperhead).